Reading from the N-terminus, the 101-residue chain is Movement protein (101 aa).

Residues 30 to 50 traverse the membrane as a helical segment; sequence EVAILSFVALICIYLLYLWVL.

This sequence belongs to the mastrevirus movement protein family. As to quaternary structure, interacts with the capsid protein (CP). Part of a MP-CP-viral DNA complex.

Its subcellular location is the host membrane. In terms of biological role, involved in the viral transport within, and between cells. The polypeptide is Movement protein (Maize streak virus genotype D (isolate Raw) (MSV)).